The chain runs to 426 residues: Serine--tRNA ligase (426 aa).

The tract at residues K36–E66 is disordered. Residues D46–S55 are compositionally biased toward polar residues. Residue T233–E235 participates in L-serine binding. R264–E266 contributes to the ATP binding site. Position 287 (E287) interacts with L-serine. ATP is bound at residue E351–S354. S387 is an L-serine binding site.

The protein belongs to the class-II aminoacyl-tRNA synthetase family. Type-1 seryl-tRNA synthetase subfamily. As to quaternary structure, homodimer. The tRNA molecule binds across the dimer.

Its subcellular location is the cytoplasm. The catalysed reaction is tRNA(Ser) + L-serine + ATP = L-seryl-tRNA(Ser) + AMP + diphosphate + H(+). The enzyme catalyses tRNA(Sec) + L-serine + ATP = L-seryl-tRNA(Sec) + AMP + diphosphate + H(+). Its pathway is aminoacyl-tRNA biosynthesis; selenocysteinyl-tRNA(Sec) biosynthesis; L-seryl-tRNA(Sec) from L-serine and tRNA(Sec): step 1/1. In terms of biological role, catalyzes the attachment of serine to tRNA(Ser). Is also able to aminoacylate tRNA(Sec) with serine, to form the misacylated tRNA L-seryl-tRNA(Sec), which will be further converted into selenocysteinyl-tRNA(Sec). This chain is Serine--tRNA ligase, found in Francisella tularensis subsp. novicida (strain U112).